We begin with the raw amino-acid sequence, 533 residues long: MKTPTIPTLLGPDGMTSLREYAGYHGGGSGFGGQLRSWNPPSESVDAALLPNFTRGNARADDLVRNNGYAANAIQLHQDHIVGSFFRLSHRPSWRYLGIGEEEARAFSREVEAAWKEFAEDDCCCIDVERKRTFTMMIREGVAMHAFNGELFVQATWDTSSSRLFRTQFRMVSPKRISNPNNTGDSRNCRAGVQINDSGAALGYYVSEDGYPGWMPQKWTWIPRELPGGRASFIHVFEPVEDGQTRGANVFYSVMEQMKMLDTLQNTQLQSAIVKAMYAATIESELDTQSAMDFILGANSQEQRERLTGWIGEIAAYYAAAPVRLGGAKVPHLMPGDSLNLQTAQDTDNGYSVFEQSLLRYIAAGLGVSYEQLSRNYAQMSYSTARASANESWAYFMGRRKFVASRQASQMFLCWLEEAIVRRVVTLPSKARFSFQEARSAWGNCDWIGSGRMAIDGLKEVQEAVMLIEAGLSTYEKECAKRGDDYQEIFAQQVRETMERRAAGLKPPAWAAAAFESGLRQSTEEEKSDSRAA.

It belongs to the siphoviridae portal protein family. As to quaternary structure, homododecamer. Interacts with the terminase complex composed of two small and one large terminase subunits. In terms of processing, proteolytically cleaved by the viral protease during capsid maturation.

It is found in the virion. In terms of biological role, forms the portal vertex of the capsid. This portal plays critical roles in head assembly, genome packaging, neck/tail attachment, and genome ejection. The portal protein multimerizes as a single ring-shaped homododecamer arranged around a central channel. Binds to the terminase subunits to form the packaging machine. In Escherichia phage lambda (Bacteriophage lambda), this protein is Portal protein B.